Reading from the N-terminus, the 441-residue chain is Monodehydroascorbate reductase 3 (441 aa).

Residues 14–17 (GGVA), Glu-41, Arg-48, Lys-53, Ile-96, and 147–148 (RE) contribute to the FAD site. Residues 173–179 (GGFLGLE), Glu-197, Arg-203, and Gly-262 each bind NAD(+). 175 to 179 (FLGLE) provides a ligand contact to NADP(+). Residues Arg-203 and Gly-262 each coordinate NADP(+). Asp-299 serves as a coordination point for FAD. 315–316 (EH) contacts NAD(+). 315–316 (EH) serves as a coordination point for NADP(+). Residue Arg-321 participates in L-ascorbate binding. Tyr-350 contacts FAD. Residue Tyr-350 coordinates NAD(+). Tyr-350 is a binding site for NADP(+). Arg-352 serves as a coordination point for L-ascorbate. Ser-418 carries the phosphoserine modification.

It belongs to the FAD-dependent oxidoreductase family. FAD is required as a cofactor.

Its subcellular location is the cytoplasm. It carries out the reaction 2 monodehydro-L-ascorbate radical + NADH + H(+) = 2 L-ascorbate + NAD(+). In terms of biological role, catalyzes the conversion of monodehydroascorbate to ascorbate, oxidizing NADH in the process. Required for producing sufficient ascorbate to maintain the interaction between Piriformospora indica and Arabidopsis in a mutualistic state. The chain is Monodehydroascorbate reductase 3 from Arabidopsis thaliana (Mouse-ear cress).